A 254-amino-acid polypeptide reads, in one-letter code: MAIDSKPHDDLQLFKTNLHPCGYWPDRWASDLVMDPNDPRLGAIYPQTLAWGFRRSGNLLYRPHCEHCNACVPVRVNVNAFVPNRSQRRCLARNATLVTRIVPAERNAEQLSLYRRYLHQRHPDGGMDGHGAIEFDQFLIGPWGYGRFMEIREPATNGTPGQLLAVAVTDLIHQALSAVYTFYEPNAAARGLGTLAILHQIHWAQREQRPYLYLGYWIKDHFKMDYKRRFQKLEIYDGYCWRPFSTTYPTTHTL.

Belongs to the R-transferase family. Bpt subfamily.

The protein localises to the cytoplasm. It carries out the reaction N-terminal L-glutamyl-[protein] + L-leucyl-tRNA(Leu) = N-terminal L-leucyl-L-glutamyl-[protein] + tRNA(Leu) + H(+). The catalysed reaction is N-terminal L-aspartyl-[protein] + L-leucyl-tRNA(Leu) = N-terminal L-leucyl-L-aspartyl-[protein] + tRNA(Leu) + H(+). Its function is as follows. Functions in the N-end rule pathway of protein degradation where it conjugates Leu from its aminoacyl-tRNA to the N-termini of proteins containing an N-terminal aspartate or glutamate. The protein is Aspartate/glutamate leucyltransferase of Xylella fastidiosa (strain M12).